Consider the following 369-residue polypeptide: Aminomethyltransferase (369 aa).

It belongs to the GcvT family. The glycine cleavage system is composed of four proteins: P, T, L and H.

It carries out the reaction N(6)-[(R)-S(8)-aminomethyldihydrolipoyl]-L-lysyl-[protein] + (6S)-5,6,7,8-tetrahydrofolate = N(6)-[(R)-dihydrolipoyl]-L-lysyl-[protein] + (6R)-5,10-methylene-5,6,7,8-tetrahydrofolate + NH4(+). In terms of biological role, the glycine cleavage system catalyzes the degradation of glycine. This chain is Aminomethyltransferase, found in Synechococcus sp. (strain WH7803).